Here is a 168-residue protein sequence, read N- to C-terminus: Ribosome maturation factor RimM (168 aa).

In terms of domain architecture, PRC barrel spans 96 to 168; that stretch reads EDEYFITDLI…VMIVRLLEGL (73 aa).

The protein belongs to the RimM family. Binds ribosomal protein uS19.

The protein resides in the cytoplasm. Its function is as follows. An accessory protein needed during the final step in the assembly of 30S ribosomal subunit, possibly for assembly of the head region. Essential for efficient processing of 16S rRNA. May be needed both before and after RbfA during the maturation of 16S rRNA. It has affinity for free ribosomal 30S subunits but not for 70S ribosomes. The sequence is that of Ribosome maturation factor RimM from Caldanaerobacter subterraneus subsp. tengcongensis (strain DSM 15242 / JCM 11007 / NBRC 100824 / MB4) (Thermoanaerobacter tengcongensis).